Here is a 74-residue protein sequence, read N- to C-terminus: U19-theraphotoxin-Cg1a (74 aa).

Positions 1–7 (IMFVWAS) are cleaved as a signal peptide. Positions 8 to 36 (AAEVEERGSDQRDSPASLKSMETIFQSEQ) are excised as a propeptide. 3 disulfides stabilise this stretch: Cys39-Cys53, Cys46-Cys58, and Cys52-Cys66.

It belongs to the neurotoxin 10 (Hwtx-1) family. 38 (Jztx-33) subfamily. In terms of tissue distribution, expressed by the venom gland.

It is found in the secreted. Its function is as follows. Probable ion channel inhibitor. The chain is U19-theraphotoxin-Cg1a from Chilobrachys guangxiensis (Chinese earth tiger tarantula).